Consider the following 272-residue polypeptide: tRNA pseudouridine synthase B (272 aa).

The Nucleophile role is filled by Asp-38.

This sequence belongs to the pseudouridine synthase TruB family. Type 1 subfamily.

The enzyme catalyses uridine(55) in tRNA = pseudouridine(55) in tRNA. Its function is as follows. Responsible for synthesis of pseudouridine from uracil-55 in the psi GC loop of transfer RNAs. The chain is tRNA pseudouridine synthase B from Campylobacter jejuni subsp. jejuni serotype O:23/36 (strain 81-176).